Consider the following 625-residue polypeptide: Glutamine--fructose-6-phosphate aminotransferase [isomerizing] (625 aa).

C2 serves as the catalytic Nucleophile; for GATase activity. One can recognise a Glutamine amidotransferase type-2 domain in the interval 2–229; sequence CGIVGFVGRT…NDQIVTITAD (228 aa). 2 consecutive SIS domains span residues 296–436 and 470–615; these read IDES…LRGN and LAQD…VDQP. The For Fru-6P isomerization activity role is filled by K620.

As to quaternary structure, homodimer.

The protein localises to the cytoplasm. The enzyme catalyses D-fructose 6-phosphate + L-glutamine = D-glucosamine 6-phosphate + L-glutamate. Functionally, catalyzes the first step in hexosamine metabolism, converting fructose-6P into glucosamine-6P using glutamine as a nitrogen source. The chain is Glutamine--fructose-6-phosphate aminotransferase [isomerizing] from Corynebacterium diphtheriae (strain ATCC 700971 / NCTC 13129 / Biotype gravis).